The primary structure comprises 296 residues: Bifunctional protein FolD (296 aa).

NADP(+)-binding positions include 166-168 (GRS), S191, and I232.

The protein belongs to the tetrahydrofolate dehydrogenase/cyclohydrolase family. As to quaternary structure, homodimer.

It catalyses the reaction (6R)-5,10-methylene-5,6,7,8-tetrahydrofolate + NADP(+) = (6R)-5,10-methenyltetrahydrofolate + NADPH. The enzyme catalyses (6R)-5,10-methenyltetrahydrofolate + H2O = (6R)-10-formyltetrahydrofolate + H(+). The protein operates within one-carbon metabolism; tetrahydrofolate interconversion. Functionally, catalyzes the oxidation of 5,10-methylenetetrahydrofolate to 5,10-methenyltetrahydrofolate and then the hydrolysis of 5,10-methenyltetrahydrofolate to 10-formyltetrahydrofolate. The sequence is that of Bifunctional protein FolD from Cereibacter sphaeroides (strain ATCC 17025 / ATH 2.4.3) (Rhodobacter sphaeroides).